A 205-amino-acid polypeptide reads, in one-letter code: Metalloproteinase inhibitor 1 (205 aa).

An N-terminal signal peptide occupies residues 1–24 (MMAPFASLASGILLLLSLIASSKA). Residue C25 coordinates Zn(2+). Residues 25–28 (CSCA) form an involved in metalloproteinase-binding region. 6 cysteine pairs are disulfide-bonded: C25/C94, C27/C123, C37/C148, C151/C197, C156/C161, and C169/C189. An NTR domain is found at 25-148 (CSCAPPHPQT…AFSKTYSAGC (124 aa)). A glycan (N-linked (GlcNAc...) asparagine) is linked at N54. The involved in metalloproteinase-binding stretch occupies residues 91-92 (ES). N102 carries an N-linked (GlcNAc...) asparagine glycan. S179 bears the Phosphoserine mark.

The protein belongs to the protease inhibitor I35 (TIMP) family. Interacts with MMP1, MMP3, MMP10 and MMP13, but has only very low affinity for MMP14. Interacts with CD63; identified in a complex with CD63 and ITGB1. In terms of processing, the activity of TIMP1 is dependent on the presence of disulfide bonds. N-glycosylated. As to expression, found in fetal and adult tissues. Highest levels are found in bone. Also found in lung, ovary and uterus.

Its subcellular location is the secreted. Functionally, metalloproteinase inhibitor that functions by forming one to one complexes with target metalloproteinases, such as collagenases, and irreversibly inactivates them by binding to their catalytic zinc cofactor. Acts on MMP1, MMP2, MMP3, MMP7, MMP8, MMP9, MMP10, MMP11, MMP12, MMP13 and MMP16. Does not act on MMP14. Also functions as a growth factor that regulates cell differentiation, migration and cell death and activates cellular signaling cascades via CD63 and ITGB1. Plays a role in integrin signaling. The protein is Metalloproteinase inhibitor 1 (Timp1) of Mus musculus (Mouse).